Consider the following 1161-residue polypeptide: MEADWDELSRIPVPPPSPHGLPTAATTIAFDDVSELLWAGNEFGRITSFYGPELQRYTSVRAHPVSDGPVRQILFHERGVISLSPKSVHMITRRGLTQWHISHEEMTDLYCMSLTAQLNKIIVAGCQRAMFTIDIDKGIIVDKLHTDHNYTLMKKSRYLCAATDTGSVNALSLTDFRVVKSWKSHGTAINDMDARNDLLVTCGFSVRHLGSPIVDPLANVYDLKTLSPLPPIPFHAGAAYVRMHPKLSTTSFVASQTGQLQVVDLMNPNAINLRQANVSFMLGIDISPSGEALAINDAECSIHLWGSPSKIHFNEMSKEVEFADVVPRPPPLDWSPDTPLNMIGMPYYRERLLSAWPSHLVFEVGSPPAPIDQSLIPYLRPAEMGHYAPNPKKTRRYQVENTRALTTAEPALIAPKFLSEKAREQNKFKSEASVSDTAEALAGAKLNGEAEDDPLLKYSNVEIKYSRFGVDDFDFRFYNQTTFSGLETHIANSFTNALLQLLKFIPLVRNLALHHAASTCIYETCLLCEMGYLFDMLEKANGQNCQATNLLRTFSSYREASNLGLFEENLTTKSLSSAIQSVNRFFLNQIAHDFRMIVPSSDDLDQRLSTIASESIRCMFCQNEIVRPGNSLANELIYPAIDIKQARRNPAFRFSNILRASIERETQNRGWCNYCRRYQQVTIRKSIHRMPLVLILNAALSNPICRRLWSIPGWLPEEVGIAVDNGQVMCFEGDELKTQLQNKLPNLVVYELVGLVSEIDIPEHQKPHLVSFINVSISSRELEAKNRWHLFNDFLVTEVDKDEALRFNQPWKSPCILAYQAKDARHAVDDSWKNVLDITLLFRDWSLNGGRAVETRQTLTEEEKPTPGTPVALDTEFVDLEKAEIDVKADGSQEIVRPSKSGLARVSVLRGSGVHEGVPFIDDYITIKEPIVDYVTQYSGIKPGDLDPRTSQHNLVPLKVAYKKLWLLLNLGCVFVGHGLASDFRKINIQVPKSQTVDTQYLYFHPGKNRRLSLRYLAWAVFKEYIQEEPADNNQGHDSIEDARMALRLWKKFQEYEDAGIVNQILEEIFREGSKLGFRPPPRNGVATVLSRPGTAVTMQNSSGRNTPSTPDVGGAATATATTSAPATPRQAFRRSIALTPSNGTFGGPGAGDFFGGSPLK.

2 WD repeats span residues 20–59 (GLPTAATTIAFDDVSELLWAGNEFGRITSFYGPELQRYTS) and 276–315 (ANVSFMLGIDISPSGEALAINDAECSIHLWGSPSKIHFNE). Positions 316–452 (MSKEVEFADV…GAKLNGEAED (137 aa)) are linker. The 370-residue stretch at 453-822 (DPLLKYSNVE…SPCILAYQAK (370 aa)) folds into the USP domain. Residues 871 to 1049 (VALDTEFVDL…IEDARMALRL (179 aa)) form the Exonuclease domain. Residues Asp-874, Glu-876, Asp-983, and Asp-1042 each contribute to the a divalent metal cation site. One copy of the WD 4 repeat lies at 1009–1060 (NRRLSLRYLAWAVFKEYIQEEPADNNQGHDSIEDARMALRLWKKFQEYEDAG). Residues 1092 to 1161 (RPGTAVTMQN…GDFFGGSPLK (70 aa)) are disordered. Residues 1097-1110 (VTMQNSSGRNTPST) show a composition bias toward polar residues. Over residues 1116–1129 (AATATATTSAPATP) the composition is skewed to low complexity. Residues 1145 to 1155 (TFGGPGAGDFF) are compositionally biased toward gly residues.

This sequence belongs to the peptidase C19 family. PAN2 subfamily. Forms a heterotrimer with an asymmetric homodimer of the regulatory subunit pan3 to form the poly(A)-nuclease (PAN) deadenylation complex. A divalent metal cation serves as cofactor.

It localises to the cytoplasm. It catalyses the reaction Exonucleolytic cleavage of poly(A) to 5'-AMP.. Its activity is regulated as follows. Positively regulated by the regulatory subunit pan3. Functionally, catalytic subunit of the poly(A)-nuclease (PAN) deadenylation complex, one of two cytoplasmic mRNA deadenylases involved in mRNA turnover. PAN specifically shortens poly(A) tails of RNA and the activity is stimulated by poly(A)-binding protein pab1. PAN deadenylation is followed by rapid degradation of the shortened mRNA tails by the CCR4-NOT complex. Deadenylated mRNAs are then degraded by two alternative mechanisms, namely exosome-mediated 3'-5' exonucleolytic degradation, or deadenylation-dependent mRNA decaping and subsequent 5'-3' exonucleolytic degradation by xrn1. May also be involved in post-transcriptional maturation of mRNA poly(A) tails. The sequence is that of PAN2-PAN3 deadenylation complex catalytic subunit pan2 from Neosartorya fischeri (strain ATCC 1020 / DSM 3700 / CBS 544.65 / FGSC A1164 / JCM 1740 / NRRL 181 / WB 181) (Aspergillus fischerianus).